The chain runs to 55 residues: Large ribosomal subunit protein bL33 (55 aa).

This sequence belongs to the bacterial ribosomal protein bL33 family.

This Caulobacter sp. (strain K31) protein is Large ribosomal subunit protein bL33.